The following is a 128-amino-acid chain: L-ectoine synthase (128 aa).

The protein belongs to the ectoine synthase family.

The catalysed reaction is (2S)-4-acetamido-2-aminobutanoate = L-ectoine + H2O. It functions in the pathway amine and polyamine biosynthesis; ectoine biosynthesis; L-ectoine from L-aspartate 4-semialdehyde: step 3/3. Its function is as follows. Catalyzes the circularization of gamma-N-acetyl-alpha,gamma-diaminobutyric acid (ADABA) to ectoine (1,4,5,6-tetrahydro-2-methyl-4-pyrimidine carboxylic acid), which is an excellent osmoprotectant. The polypeptide is L-ectoine synthase (Oceanobacillus iheyensis (strain DSM 14371 / CIP 107618 / JCM 11309 / KCTC 3954 / HTE831)).